The following is a 339-amino-acid chain: MKQPLNFTAELVPVAYAEALLDLVAEYGVSRQALFDAARVRPEVLDSPNGRLSFLDFNQLTYSAQALCGEPALGLVLGQRLNVSAHGILGYAVLSSANLGKAIQFALKYYRVLGLAYELELVLDDGRAELRAVESMPLGAASVFAAEGLMATLYSIACFLVGEPLQDVRVGFAYPPPAHARRYAEVFGVAAEFEQPWHWLSMPSEYLERPMALANPATVQMCEQQCEALLATLDVQEGLLTRVRRLLLARPGDFPDLEQAARELHTSGRSLRRHLSSLGTTYQQVLDDVRKRLALQYLTTTQLPLYEIALLLGFNDSSNFRRAFRKWTGKLPSDYREAP.

In terms of domain architecture, HTH araC/xylS-type spans 241 to 338; that stretch reads TRVRRLLLAR…GKLPSDYREA (98 aa). 2 DNA-binding regions (H-T-H motif) span residues 258 to 279 and 305 to 328; these read EQAARELHTSGRSLRRHLSSLG and LYEIALLLGFNDSSNFRRAFRKWT.

In terms of biological role, probably activates the ArgJ gene that encodes ornithine acetyltransferase. Binds to its own promoter-operator region. Probably binds ornithine. This is Ornithine utilization regulator (oruR) from Pseudomonas aeruginosa (strain ATCC 15692 / DSM 22644 / CIP 104116 / JCM 14847 / LMG 12228 / 1C / PRS 101 / PAO1).